Consider the following 426-residue polypeptide: Histidine--tRNA ligase (426 aa).

The protein belongs to the class-II aminoacyl-tRNA synthetase family. As to quaternary structure, homodimer.

It is found in the cytoplasm. It carries out the reaction tRNA(His) + L-histidine + ATP = L-histidyl-tRNA(His) + AMP + diphosphate + H(+). The chain is Histidine--tRNA ligase from Streptococcus pyogenes serotype M18 (strain MGAS8232).